The sequence spans 601 residues: 4-hydroxy-3-methylbut-2-en-1-yl diphosphate synthase (flavodoxin) (601 aa).

Residues cysteine 507, cysteine 510, cysteine 542, and glutamate 549 each contribute to the [4Fe-4S] cluster site.

This sequence belongs to the IspG family. It depends on [4Fe-4S] cluster as a cofactor.

The enzyme catalyses (2E)-4-hydroxy-3-methylbut-2-enyl diphosphate + oxidized [flavodoxin] + H2O + 2 H(+) = 2-C-methyl-D-erythritol 2,4-cyclic diphosphate + reduced [flavodoxin]. The protein operates within isoprenoid biosynthesis; isopentenyl diphosphate biosynthesis via DXP pathway; isopentenyl diphosphate from 1-deoxy-D-xylulose 5-phosphate: step 5/6. Functionally, converts 2C-methyl-D-erythritol 2,4-cyclodiphosphate (ME-2,4cPP) into 1-hydroxy-2-methyl-2-(E)-butenyl 4-diphosphate. This chain is 4-hydroxy-3-methylbut-2-en-1-yl diphosphate synthase (flavodoxin), found in Chlamydia muridarum (strain MoPn / Nigg).